Consider the following 343-residue polypeptide: Probable transcription factor MYB58 (343 aa).

Positions 1–30 are disordered; it reads MARAPGGVRRRSGRRGAGGGGAGGGGEALR. Over residues 15–27 the composition is skewed to gly residues; sequence RGAGGGGAGGGGE. 2 consecutive HTH myb-type domains span residues 26-78 and 79-134; these read GEAL…VNKL and RPNL…KRLA. 2 DNA-binding regions (H-T-H motif) span residues 54–77 and 107–130; these read WSSI…WVNK and WARI…STRQ. 3 disordered regions span residues 137–169, 219–238, and 307–343; these read LRGP…TATF, PPAD…PPPL, and DDLP…DDVL. Polar residues predominate over residues 157–169; sequence PSSSSLDSQTATF. The span at 320–336 shows a compositional bias: pro residues; it reads QPPPPPPPPPPPSPSPS.

The protein resides in the nucleus. Functionally, probable transcription factor. This chain is Probable transcription factor MYB58, found in Oryza sativa subsp. japonica (Rice).